Consider the following 560-residue polypeptide: Putative transport protein VS_1837 (560 aa).

5 helical membrane-spanning segments follow: residues 5–25 (VVLL…SIGL), 37–57 (LGNS…GFSF), 66–86 (FMLF…GIFF), 91–111 (HYLI…YFCS), and 155–175 (LGLV…VGLI). RCK C-terminal domains are found at residues 203-292 (RGLG…FRNG) and 293-376 (KEVF…KIGF). The next 6 helical transmembrane spans lie at 386 to 406 (LTAF…TMTF), 409 to 429 (VSFG…LGFL), 450 to 470 (LGLM…IFEH), 478 to 498 (VIGI…LVGA), 506 to 526 (ALLF…DIVN), and 539 to 559 (AGTY…IIII).

This sequence belongs to the AAE transporter (TC 2.A.81) family. YbjL subfamily.

It is found in the cell membrane. The chain is Putative transport protein VS_1837 from Vibrio atlanticus (strain LGP32) (Vibrio splendidus (strain Mel32)).